A 523-amino-acid polypeptide reads, in one-letter code: Probable E3 ubiquitin-protein ligase ZFP1 (523 aa).

A compositionally biased stretch (basic and acidic residues) spans 18-28; the sequence is EQGHSHIHSES. The interval 18–43 is disordered; that stretch reads EQGHSHIHSESFNRTGNDSSDQGAQH. Residues 29-40 are compositionally biased toward polar residues; that stretch reads FNRTGNDSSDQG. The segment at 471-512 adopts an RING-type; atypical zinc-finger fold; that stretch reads CIICQEEYQVKECIGTLDCGHRYHEDCIKQWLMVKNLCPICK.

It belongs to the RING-type zinc finger family. Interacts with DJA6.

The catalysed reaction is S-ubiquitinyl-[E2 ubiquitin-conjugating enzyme]-L-cysteine + [acceptor protein]-L-lysine = [E2 ubiquitin-conjugating enzyme]-L-cysteine + N(6)-ubiquitinyl-[acceptor protein]-L-lysine.. The protein operates within protein modification; protein ubiquitination. Probable E3 ubiquitin-protein ligase. The sequence is that of Probable E3 ubiquitin-protein ligase ZFP1 from Oryza sativa subsp. japonica (Rice).